The following is a 263-amino-acid chain: Small ribosomal subunit protein eS4 (263 aa).

Residues 42-104 (LPLIIFLRNR…TGENFRLIYD (63 aa)) form the S4 RNA-binding domain.

The protein belongs to the eukaryotic ribosomal protein eS4 family.

This chain is Small ribosomal subunit protein eS4 (rps4), found in Ictalurus punctatus (Channel catfish).